We begin with the raw amino-acid sequence, 392 residues long: tRNA (guanine-N(7)-)-methyltransferase (392 aa).

3 residues coordinate S-adenosyl-L-methionine: E123, E148, and D175. Positions 201 and 231 each coordinate substrate.

This sequence belongs to the class I-like SAM-binding methyltransferase superfamily. TrmB family.

It carries out the reaction guanosine(46) in tRNA + S-adenosyl-L-methionine = N(7)-methylguanosine(46) in tRNA + S-adenosyl-L-homocysteine. The protein operates within tRNA modification; N(7)-methylguanine-tRNA biosynthesis. Functionally, catalyzes the formation of N(7)-methylguanine at position 46 (m7G46) in tRNA. The sequence is that of tRNA (guanine-N(7)-)-methyltransferase from Campylobacter jejuni subsp. jejuni serotype O:6 (strain 81116 / NCTC 11828).